A 258-amino-acid polypeptide reads, in one-letter code: Ureidoacrylate amidohydrolase RutB (258 aa).

The interval 1 to 23 (MDRPTTYPMDQPAGFRDAQGRHG) is disordered. Asp47 acts as the Proton acceptor in catalysis. Residue Lys156 is part of the active site. Cys189 (nucleophile) is an active-site residue.

Belongs to the isochorismatase family. RutB subfamily.

The enzyme catalyses (Z)-3-ureidoacrylate + H2O + H(+) = (Z)-3-aminoacrylate + NH4(+) + CO2. It catalyses the reaction (Z)-3-ureidoacrylate + H2O = (Z)-3-aminoacrylate + carbamate + H(+). The catalysed reaction is (Z)-2-methylureidoacrylate + H2O + H(+) = (Z)-2-methylaminoacrylate + NH4(+) + CO2. Its function is as follows. Hydrolyzes ureidoacrylate to form aminoacrylate and carbamate. The carbamate hydrolyzes spontaneously, thereby releasing one of the nitrogen atoms of the pyrimidine ring as ammonia and one of its carbon atoms as CO2. In Methylobacterium radiotolerans (strain ATCC 27329 / DSM 1819 / JCM 2831 / NBRC 15690 / NCIMB 10815 / 0-1), this protein is Ureidoacrylate amidohydrolase RutB.